The sequence spans 59 residues: Protein translocase subunit SecE (59 aa).

The helical transmembrane segment at leucine 37–leucine 57 threads the bilayer.

The protein belongs to the SecE/SEC61-gamma family. In terms of assembly, component of the Sec protein translocase complex. Heterotrimer consisting of SecY (alpha), SecG (beta) and SecE (gamma) subunits. The heterotrimers can form oligomers, although 1 heterotrimer is thought to be able to translocate proteins. Interacts with the ribosome. May interact with SecDF, and other proteins may be involved.

It is found in the cell membrane. In terms of biological role, essential subunit of the Sec protein translocation channel SecYEG. Clamps together the 2 halves of SecY. May contact the channel plug during translocation. This Metallosphaera sedula (strain ATCC 51363 / DSM 5348 / JCM 9185 / NBRC 15509 / TH2) protein is Protein translocase subunit SecE.